Consider the following 242-residue polypeptide: Ubiquinone biosynthesis O-methyltransferase (242 aa).

Residues R44, G64, D85, and M129 each coordinate S-adenosyl-L-methionine.

It belongs to the methyltransferase superfamily. UbiG/COQ3 family.

It carries out the reaction a 3-demethylubiquinol + S-adenosyl-L-methionine = a ubiquinol + S-adenosyl-L-homocysteine + H(+). The enzyme catalyses a 3-(all-trans-polyprenyl)benzene-1,2-diol + S-adenosyl-L-methionine = a 2-methoxy-6-(all-trans-polyprenyl)phenol + S-adenosyl-L-homocysteine + H(+). The protein operates within cofactor biosynthesis; ubiquinone biosynthesis. Functionally, O-methyltransferase that catalyzes the 2 O-methylation steps in the ubiquinone biosynthetic pathway. This is Ubiquinone biosynthesis O-methyltransferase from Salmonella paratyphi A (strain ATCC 9150 / SARB42).